A 693-amino-acid chain; its full sequence is DNA ligase (693 aa).

Residues 45–49, 94–95, and E131 contribute to the NAD(+) site; these read DSEYD and SI. K133 functions as the N6-AMP-lysine intermediate in the catalytic mechanism. 4 residues coordinate NAD(+): R154, E190, K307, and K331. Residues C429, C432, C447, and C453 each coordinate Zn(2+). The region spanning 615-693 is the BRCT domain; that stretch reads ASSSKLEGKT…EEGLLSLLAE (79 aa).

This sequence belongs to the NAD-dependent DNA ligase family. LigA subfamily. It depends on Mg(2+) as a cofactor. Mn(2+) serves as cofactor.

The catalysed reaction is NAD(+) + (deoxyribonucleotide)n-3'-hydroxyl + 5'-phospho-(deoxyribonucleotide)m = (deoxyribonucleotide)n+m + AMP + beta-nicotinamide D-nucleotide.. In terms of biological role, DNA ligase that catalyzes the formation of phosphodiester linkages between 5'-phosphoryl and 3'-hydroxyl groups in double-stranded DNA using NAD as a coenzyme and as the energy source for the reaction. It is essential for DNA replication and repair of damaged DNA. In Methylobacillus flagellatus (strain ATCC 51484 / DSM 6875 / VKM B-1610 / KT), this protein is DNA ligase.